A 555-amino-acid chain; its full sequence is Glutamine--tRNA ligase (555 aa).

Positions 34–44 (PEPNGYLHIGH) match the 'HIGH' region motif. Residues 35-37 (EPN) and 41-47 (HIGHAKS) contribute to the ATP site. Residues aspartate 67 and tyrosine 212 each contribute to the L-glutamine site. Residues threonine 231, 261–262 (RL), and 269–271 (MSK) contribute to the ATP site. Residues 268–272 (VMSKR) carry the 'KMSKS' region motif.

The protein belongs to the class-I aminoacyl-tRNA synthetase family. Monomer.

It is found in the cytoplasm. The enzyme catalyses tRNA(Gln) + L-glutamine + ATP = L-glutaminyl-tRNA(Gln) + AMP + diphosphate. In Proteus mirabilis (strain HI4320), this protein is Glutamine--tRNA ligase.